The chain runs to 720 residues: Photosystem I P700 chlorophyll a apoprotein A1 (720 aa).

A run of 8 helical transmembrane segments spans residues 62–85 (IFSAHFGQLAIIFIWLSGMYFHGA), 148–171 (LYCTAIGGLIFAALMLFAGWFHYH), 186–210 (LNHHLAGLLGLGSLSWAGHQVHVSL), 282–300 (IVHHHLAIAVIFLIAGHMY), 337–360 (WHAQLALNLAILGSLTIVVAHHMY), 376–402 (LSLFTHHMWIGGFVIIGAAAHAAIFLV), 424–446 (AIISHLNWTCIFLGFHSFGLYIH), and 522–540 (FLVHHIHAFTIHVTVLILL). 2 residues coordinate [4Fe-4S] cluster: cysteine 564 and cysteine 573. 2 helical membrane passes run 580–601 (HVFLGLFWMYNAISVVIFHFSW) and 655–677 (LSAYGLFFLGAHFVWAFSLMFLF). A chlorophyll a'-binding site is contributed by histidine 666. Residues methionine 674 and tyrosine 682 each coordinate chlorophyll a. Residue tryptophan 683 coordinates phylloquinone. The chain crosses the membrane as a helical span at residues 715-720 (AVGVAH).

It belongs to the PsaA/PsaB family. In terms of assembly, the PsaA/B heterodimer binds the P700 chlorophyll special pair and subsequent electron acceptors. PSI consists of a core antenna complex that captures photons, and an electron transfer chain that converts photonic excitation into a charge separation. The eukaryotic PSI reaction center is composed of at least 11 subunits. P700 is a chlorophyll a/chlorophyll a' dimer, A0 is one or more chlorophyll a, A1 is one or both phylloquinones and FX is a shared 4Fe-4S iron-sulfur center. serves as cofactor.

Its subcellular location is the plastid. The protein localises to the chloroplast thylakoid membrane. The enzyme catalyses reduced [plastocyanin] + hnu + oxidized [2Fe-2S]-[ferredoxin] = oxidized [plastocyanin] + reduced [2Fe-2S]-[ferredoxin]. Functionally, psaA and PsaB bind P700, the primary electron donor of photosystem I (PSI), as well as the electron acceptors A0, A1 and FX. PSI is a plastocyanin-ferredoxin oxidoreductase, converting photonic excitation into a charge separation, which transfers an electron from the donor P700 chlorophyll pair to the spectroscopically characterized acceptors A0, A1, FX, FA and FB in turn. Oxidized P700 is reduced on the lumenal side of the thylakoid membrane by plastocyanin. In Ephedra tweediana (Vining horsetail), this protein is Photosystem I P700 chlorophyll a apoprotein A1.